Consider the following 625-residue polypeptide: Arginine--tRNA ligase (625 aa).

A 'HIGH' region motif is present at residues 117–127 (ANPIHPLHIGH).

It belongs to the class-I aminoacyl-tRNA synthetase family.

The protein resides in the cytoplasm. The enzyme catalyses tRNA(Arg) + L-arginine + ATP = L-arginyl-tRNA(Arg) + AMP + diphosphate. The chain is Arginine--tRNA ligase from Saccharolobus solfataricus (strain ATCC 35092 / DSM 1617 / JCM 11322 / P2) (Sulfolobus solfataricus).